Here is a 397-residue protein sequence, read N- to C-terminus: Torsin-3A (397 aa).

The signal sequence occupies residues 1 to 25; it reads MLRGPWRQLWLFFLLLLPGAPEPRG. N-linked (GlcNAc...) asparagine glycosylation is present at Asn122. Residue 167–174 participates in ATP binding; it reads GWSGTGKN.

The protein belongs to the ClpA/ClpB family. Torsin subfamily. As to quaternary structure, may not form homohexamers. N-glycosylated. In terms of tissue distribution, ubiquitously expressed. Highest expression in stomach, salivary glands and lymph nodes. Isoform 2 is expressed in placenta.

The protein resides in the cytoplasm. Its subcellular location is the endoplasmic reticulum lumen. In Homo sapiens (Human), this protein is Torsin-3A (TOR3A).